A 248-amino-acid polypeptide reads, in one-letter code: Ribonuclease HII (248 aa).

Residues 29 to 219 enclose the RNase H type-2 domain; it reads DIVCGVDEAG…VREAHLRLGT (191 aa). The a divalent metal cation site is built by Asp35, Glu36, and Asp128.

It belongs to the RNase HII family. Mn(2+) is required as a cofactor. Mg(2+) serves as cofactor.

It is found in the cytoplasm. It catalyses the reaction Endonucleolytic cleavage to 5'-phosphomonoester.. Its function is as follows. Endonuclease that specifically degrades the RNA of RNA-DNA hybrids. This Paraburkholderia xenovorans (strain LB400) protein is Ribonuclease HII.